Consider the following 761-residue polypeptide: Putative pentatricopeptide repeat-containing protein At2g02150 (761 aa).

PPR repeat units follow at residues Ser-141–Cys-175, Gly-191–Pro-225, Lys-226–Pro-260, Thr-261–Pro-295, Asp-296–Pro-330, Asp-331–Pro-365, Asn-366–Pro-400, Asn-401–Trp-435, Asn-436–Pro-470, Asn-471–Pro-505, Asp-506–Ala-540, Asn-541–Val-575, Thr-576–Asp-606, Asn-612–Pro-646, Asp-647–Leu-681, Asp-682–Pro-716, and Asp-717–Thr-751.

This sequence belongs to the PPR family. P subfamily.

This chain is Putative pentatricopeptide repeat-containing protein At2g02150, found in Arabidopsis thaliana (Mouse-ear cress).